The sequence spans 258 residues: UPF0246 protein Pnec_1068 (258 aa).

Belongs to the UPF0246 family.

This is UPF0246 protein Pnec_1068 from Polynucleobacter necessarius subsp. necessarius (strain STIR1).